We begin with the raw amino-acid sequence, 239 residues long: Small ribosomal subunit protein uS5 (239 aa).

A disordered region spans residues 1–62; that stretch reads MADETEIQAA…DDRRGSEEQG (62 aa). Low complexity predominate over residues 9 to 19; it reads AAAPAEAAPGA. The span at 34-62 shows a compositional bias: basic and acidic residues; that stretch reads GGNDRGGDRGRGRDGRGRRDDRRGSEEQG. The S5 DRBM domain occupies 65 to 128; that stretch reads LIEKLVHINR…AAAKKAMVRV (64 aa).

This sequence belongs to the universal ribosomal protein uS5 family. In terms of assembly, part of the 30S ribosomal subunit. Contacts proteins S4 and S8.

In terms of biological role, with S4 and S12 plays an important role in translational accuracy. Functionally, located at the back of the 30S subunit body where it stabilizes the conformation of the head with respect to the body. In Rhizorhabdus wittichii (strain DSM 6014 / CCUG 31198 / JCM 15750 / NBRC 105917 / EY 4224 / RW1) (Sphingomonas wittichii), this protein is Small ribosomal subunit protein uS5.